Reading from the N-terminus, the 130-residue chain is Large ribosomal subunit protein bL19 (130 aa).

Belongs to the bacterial ribosomal protein bL19 family.

Functionally, this protein is located at the 30S-50S ribosomal subunit interface and may play a role in the structure and function of the aminoacyl-tRNA binding site. The protein is Large ribosomal subunit protein bL19 of Psychrobacter arcticus (strain DSM 17307 / VKM B-2377 / 273-4).